The primary structure comprises 238 residues: Uridylate kinase (238 aa).

ATP is bound at residue 12 to 15 (KLSG). Gly-54 lines the UMP pocket. Positions 55 and 59 each coordinate ATP. UMP contacts are provided by residues Asp-74 and 135 to 142 (TGNPFFTT). ATP-binding residues include Thr-162, Tyr-168, and Asp-171.

This sequence belongs to the UMP kinase family. In terms of assembly, homohexamer.

Its subcellular location is the cytoplasm. The enzyme catalyses UMP + ATP = UDP + ADP. It functions in the pathway pyrimidine metabolism; CTP biosynthesis via de novo pathway; UDP from UMP (UMPK route): step 1/1. Inhibited by UTP. Functionally, catalyzes the reversible phosphorylation of UMP to UDP. In Bordetella bronchiseptica (strain ATCC BAA-588 / NCTC 13252 / RB50) (Alcaligenes bronchisepticus), this protein is Uridylate kinase.